The primary structure comprises 71 residues: Pro-MCH (71 aa).

The first 20 residues, 1–20, serve as a signal peptide directing secretion; it reads AKMSLSSYILILTLVLFSQG.

This sequence belongs to the melanin-concentrating hormone family.

It localises to the secreted. This is Pro-MCH (PMCH) from Carlito syrichta (Philippine tarsier).